The primary structure comprises 138 residues: Large ribosomal subunit protein uL16 (138 aa).

Positions Met1–Gln13 are enriched in basic residues. A disordered region spans residues Met1–Thr22.

Belongs to the universal ribosomal protein uL16 family. Part of the 50S ribosomal subunit.

Binds 23S rRNA and is also seen to make contacts with the A and possibly P site tRNAs. In Paracidovorax citrulli (strain AAC00-1) (Acidovorax citrulli), this protein is Large ribosomal subunit protein uL16.